We begin with the raw amino-acid sequence, 221 residues long: 2-amino-5-formylamino-6-ribosylaminopyrimidin-4(3H)-one 5'-monophosphate deformylase (221 aa).

4 residues coordinate Fe cation: E29, H31, D40, and H108.

The protein belongs to the creatininase superfamily. FAPy deformylase family. Homodimer. Fe(2+) is required as a cofactor. Zn(2+) serves as cofactor.

The catalysed reaction is 2-amino-5-formylamino-6-(5-phospho-D-ribosylamino)pyrimidin-4(3H)-one + H2O = 2,5-diamino-6-(1-D-ribosylamino)pyrimidin-4(3H)-one 5'-phosphate + formate + H(+). It functions in the pathway cofactor biosynthesis; coenzyme F420 biosynthesis. It participates in cofactor biosynthesis; riboflavin biosynthesis. Its function is as follows. Catalyzes the hydrolysis of the formamide of 2-amino-5-formylamino-6-ribosylamino-4(3H)-pyrimidinone 5'-monophosphate (FAPy) to form 2,5-diamino-6-ribosylamino-4(3H)-pyrimidinone 5'-phosphate (APy). The polypeptide is 2-amino-5-formylamino-6-ribosylaminopyrimidin-4(3H)-one 5'-monophosphate deformylase (Methanococcus maripaludis (strain C7 / ATCC BAA-1331)).